The primary structure comprises 468 residues: RUS family member 1 (468 aa).

A2 is modified (N-acetylalanine). T49 carries the phosphothreonine modification. The helical transmembrane segment at 247–267 (LLMLPLVSGCPGFSLGCFFFL) threads the bilayer.

This sequence belongs to the RUS1 family.

The protein localises to the membrane. The chain is RUS family member 1 from Homo sapiens (Human).